A 130-amino-acid chain; its full sequence is MSMQDPLADMLTRIRNAQMAEKSVVSMPSSTLKVAVAKVLKDEGYIAGYQVTGEAKPSLSIELKYFEGRPVIEELKRSSRPGLRQYKAVTDLPKVRGGLGVSIVSTNKGVMTDRAARAAGVGGEVLCTVF.

It belongs to the universal ribosomal protein uS8 family. Part of the 30S ribosomal subunit. Contacts proteins S5 and S12.

One of the primary rRNA binding proteins, it binds directly to 16S rRNA central domain where it helps coordinate assembly of the platform of the 30S subunit. The chain is Small ribosomal subunit protein uS8 from Pseudomonas putida (strain ATCC 700007 / DSM 6899 / JCM 31910 / BCRC 17059 / LMG 24140 / F1).